Consider the following 218-residue polypeptide: Ribose-5-phosphate isomerase A (218 aa).

Substrate-binding positions include 28–31 (TGST), 81–84 (DGAD), and 94–97 (KGGG). Catalysis depends on E103, which acts as the Proton acceptor. K121 is a binding site for substrate.

The protein belongs to the ribose 5-phosphate isomerase family. In terms of assembly, homodimer.

It catalyses the reaction aldehydo-D-ribose 5-phosphate = D-ribulose 5-phosphate. The protein operates within carbohydrate degradation; pentose phosphate pathway; D-ribose 5-phosphate from D-ribulose 5-phosphate (non-oxidative stage): step 1/1. Its function is as follows. Catalyzes the reversible conversion of ribose-5-phosphate to ribulose 5-phosphate. The protein is Ribose-5-phosphate isomerase A of Colwellia psychrerythraea (strain 34H / ATCC BAA-681) (Vibrio psychroerythus).